The sequence spans 407 residues: MTYPNLLDRFLTYVKVNTRSDEHSTTTPSTQSQVDFATNVLIPEMKRVGLQNVYYLPNGFAIGTLPANDPSLTRKIGFISHMDTADFNAEGVNPQVIENYDGGVIELGNSGFKLDPADFKSLEKYPGQTLITTDGTTLLGADDKSGIAEIMTAIEYLTAHPEIKHCEIRVGFGPDEEIGVGANKFDAEDFDVDFAYTVDGGPLGELQYETFSAAGAELHFQGRNVHPGTAKGQMVNALQLAIDFHNQLPENDRPELTEGYQGFYHLMDVTGSVEEARASYIIRDFEKDAFEARKASMQSIADKMNAELGSYRVTLNLTDQYYNMKEVIEKDMTPITIAKAVMEDLGITPIIEPIRGGTDGSKISFMGIPTPNIFAGGENMHGRFEYVSLQTMERAVDTIIGIVAYKG.

Zn(2+) is bound at residue histidine 81. Aspartate 83 is a catalytic residue. Aspartate 142 contacts Zn(2+). Glutamate 176 acts as the Proton acceptor in catalysis. The Zn(2+) site is built by glutamate 177, aspartate 199, and histidine 381.

Belongs to the peptidase M20B family. Zn(2+) is required as a cofactor.

It localises to the cytoplasm. The catalysed reaction is Release of the N-terminal residue from a tripeptide.. In terms of biological role, cleaves the N-terminal amino acid of tripeptides. This is Peptidase T from Streptococcus pneumoniae (strain P1031).